A 175-amino-acid chain; its full sequence is MCNSIILENKIFDSQWDNKNHTLFENLMPRDNNNLIENSNYDNNNINNNNNNNNTDNDNDNNNDNEPFYNSNIPNEMQINKYSRFGFKPSQPISKKNENQIEFNNILSFSIKSFLLLILYILFFNYQLYSKYFIILLSLNLIITLISIKSIFKYKNLKKLKNILIYKIQSKIIIL.

The span at 35-56 (LIENSNYDNNNINNNNNNNNTD) shows a compositional bias: low complexity. The segment at 35-70 (LIENSNYDNNNINNNNNNNNTDNDNDNNNDNEPFYN) is disordered. 2 consecutive transmembrane segments (helical) span residues 106–126 (ILSF…FFNY) and 132–152 (YFII…KSIF).

It is found in the membrane. This is an uncharacterized protein from Dictyostelium discoideum (Social amoeba).